Consider the following 285-residue polypeptide: Nucleotide-binding protein FMG_1084 (285 aa).

8 to 15 (GMSGAGKS) contacts ATP. 59-62 (DIRG) is a binding site for GTP.

It belongs to the RapZ-like family.

Functionally, displays ATPase and GTPase activities. This chain is Nucleotide-binding protein FMG_1084, found in Finegoldia magna (strain ATCC 29328 / DSM 20472 / WAL 2508) (Peptostreptococcus magnus).